We begin with the raw amino-acid sequence, 642 residues long: Bud site selection protein 5 (642 aa).

The 116-residue stretch at 224-339 (EVFRIQLYLN…DIVQLFINKK (116 aa)) folds into the N-terminal Ras-GEF domain. The 229-residue stretch at 412-640 (SPWSLAKTLT…YQVSIAKVPR (229 aa)) folds into the Ras-GEF domain.

As to quaternary structure, interacts with AXL2, BEM1, GSP1 and in haploid cells with AXL1.

It is found in the bud neck. It localises to the cytoplasm. The protein resides in the cell cortex. In terms of biological role, GDP-GTP exchange factor (GEF) for the small GTPase BUD1/RSR1. Regulates the activity of BUD1 together with BUD2 which is a GTPase-activating protein (GAP) of BUD1. Required to produce both the axial and bipolar patterns of bud site selection. Determines the orientation of division axis. Overexpression can suppress mutations in PRP20 which is the GEF for GSP1. May be a cytoplasmic GEF for GSP1. Might also act on the Ras-like protein CDC42. Appears to bind to Ras proteins but not to activate them. The chain is Bud site selection protein 5 (BUD5) from Saccharomyces cerevisiae (strain ATCC 204508 / S288c) (Baker's yeast).